Consider the following 164-residue polypeptide: R-phycoerythrin alpha chain (164 aa).

Positions 47, 81, 82, 84, 88, 137, 139, and 142 each coordinate (2R,3E)-phycoerythrobilin.

Belongs to the phycobiliprotein family. In terms of assembly, heterododecamer of 6 alpha and 6 beta chains. The basic functional unit of phycobiliproteins is a ring-shaped hexamer formed from two back-to-back trimers contacting via the alpha chain subunits. The trimers are composed of alpha/beta subunit heterodimers arranged around a three-fold axis of symmetry. The phycoerythrins also contain a gamma subunit which is located in the center of the hexamer. Contains two covalently linked phycoerythrobilin chromophores. In PubMed:8876649 the authors refer to the bilins as phycoerythrobilins. In the PDB entries, the bilins are named as phycocyanobilins although the modeled compounds correspond to phycoerythrobilins.

The protein localises to the plastid. The protein resides in the chloroplast thylakoid membrane. Its function is as follows. Light-harvesting photosynthetic tetrapyrrole chromophore-protein from the phycobiliprotein complex. This is R-phycoerythrin alpha chain (cpeA) from Polysiphonia urceolata (Red alga).